Here is a 188-residue protein sequence, read N- to C-terminus: Crossover junction endodeoxyribonuclease RuvC (188 aa).

Active-site residues include D7, E68, and D141. Residues D7, E68, and D141 each coordinate Mg(2+).

Belongs to the RuvC family. In terms of assembly, homodimer which binds Holliday junction (HJ) DNA. The HJ becomes 2-fold symmetrical on binding to RuvC with unstacked arms; it has a different conformation from HJ DNA in complex with RuvA. In the full resolvosome a probable DNA-RuvA(4)-RuvB(12)-RuvC(2) complex forms which resolves the HJ. It depends on Mg(2+) as a cofactor.

The protein resides in the cytoplasm. It catalyses the reaction Endonucleolytic cleavage at a junction such as a reciprocal single-stranded crossover between two homologous DNA duplexes (Holliday junction).. In terms of biological role, the RuvA-RuvB-RuvC complex processes Holliday junction (HJ) DNA during genetic recombination and DNA repair. Endonuclease that resolves HJ intermediates. Cleaves cruciform DNA by making single-stranded nicks across the HJ at symmetrical positions within the homologous arms, yielding a 5'-phosphate and a 3'-hydroxyl group; requires a central core of homology in the junction. The consensus cleavage sequence is 5'-(A/T)TT(C/G)-3'. Cleavage occurs on the 3'-side of the TT dinucleotide at the point of strand exchange. HJ branch migration catalyzed by RuvA-RuvB allows RuvC to scan DNA until it finds its consensus sequence, where it cleaves and resolves the cruciform DNA. The sequence is that of Crossover junction endodeoxyribonuclease RuvC from Streptomyces coelicolor (strain ATCC BAA-471 / A3(2) / M145).